A 485-amino-acid polypeptide reads, in one-letter code: Transcription factor ETV6 (485 aa).

The segment covering 1 to 10 (MSETPAQSSI) has biased composition (polar residues). Residues 1–32 (MSETPAQSSIKQERISYTPPESPVASHRSSTP) are disordered. An N6-acetyllysine; alternate modification is found at Lys-11. A Glycyl lysine isopeptide (Lys-Gly) (interchain with G-Cter in SUMO2); alternate cross-link involves residue Lys-11. At Thr-18 the chain carries Phosphothreonine. Residue Ser-22 is modified to Phosphoserine. The PNT domain maps to 41–125 (ALRMEEDSIH…ELLQHILKQR (85 aa)). The disordered stretch occupies residues 157–210 (NCVQRTPRTPAESVHHNPPTIELLHRPRSPITTNHRPSPDPEQQRPQRSPLDNM). Thr-165 carries the post-translational modification Phosphothreonine. Residues Ser-215, Ser-240, and Ser-251 each carry the phosphoserine modification. Residue Lys-284 forms a Glycyl lysine isopeptide (Lys-Gly) (interchain with G-Cter in SUMO2) linkage. Residue Lys-298 is modified to N6-acetyllysine; alternate. A Glycyl lysine isopeptide (Lys-Gly) (interchain with G-Cter in SUMO2); alternate cross-link involves residue Lys-298. Ser-319 is modified (phosphoserine). Positions 335–416 (RLLWDYVYQL…PGQRLLFRFM (82 aa)) form a DNA-binding region, ETS. Glycyl lysine isopeptide (Lys-Gly) (interchain with G-Cter in SUMO2) cross-links involve residues Lys-399 and Lys-417. Residues 440-485 (EQTYQEDEPTIASPVGWPRGNLPTGTAGGVMEAGELGVAVKEETRE) form a disordered region.

This sequence belongs to the ETS family. As to quaternary structure, can form homodimers or heterodimers with TEL2 or FLI1. Interacts with L3MBTL1 and HDAC9.

The protein localises to the nucleus. In terms of biological role, transcriptional repressor; binds to the DNA sequence 5'-CCGGAAGT-3'. Plays a role in hematopoiesis and malignant transformation. The polypeptide is Transcription factor ETV6 (Etv6) (Mus musculus (Mouse)).